Here is a 235-residue protein sequence, read N- to C-terminus: Chaperone protein TorD (235 aa).

This sequence belongs to the TorD/DmsD family. TorD subfamily.

It localises to the cytoplasm. Functionally, involved in the biogenesis of TorA. Acts on TorA before the insertion of the molybdenum cofactor and, as a result, probably favors a conformation of the apoenzyme that is competent for acquiring the cofactor. This Shewanella amazonensis (strain ATCC BAA-1098 / SB2B) protein is Chaperone protein TorD.